A 507-amino-acid polypeptide reads, in one-letter code: L-amino-acid oxidase (507 aa).

The first 19 residues, 1-19 (MNVLFIFSLLFLAALESCA), serve as a signal peptide directing secretion. Cysteines 29 and 192 form a disulfide. Residues 62-63 (MA), 82-83 (EA), Arg90, and 106-109 (GPMR) each bind FAD. Arg109 serves as a coordination point for substrate. 2 N-linked (GlcNAc...) asparagine glycosylation sites follow: Asn191 and Asn213. Val280 contacts FAD. An intrachain disulfide couples Cys348 to Cys429. The N-linked (GlcNAc...) asparagine glycan is linked to Asn378. Tyr389 is a substrate binding site. FAD contacts are provided by residues Glu473 and 480–485 (GWIDST).

Belongs to the flavin monoamine oxidase family. FIG1 subfamily. As to quaternary structure, homodimer; non-covalently linked. Requires FAD as cofactor. Expressed by the venom gland.

The protein resides in the secreted. It carries out the reaction an L-alpha-amino acid + O2 + H2O = a 2-oxocarboxylate + H2O2 + NH4(+). It catalyses the reaction L-leucine + O2 + H2O = 4-methyl-2-oxopentanoate + H2O2 + NH4(+). Its function is as follows. Catalyzes an oxidative deamination of predominantly hydrophobic and aromatic L-amino acids, thus producing hydrogen peroxide that may contribute to the diverse toxic effects of this enzyme. Shows activity on L-Leu. Exhibits diverse biological activities, such as hemorrhage, hemolysis, edema, apoptosis of vascular endothelial cells or tumor cell lines, antibacterial and antiparasitic activities. This protein induces platelet aggregation by both hydrogen peroxide production and binding to platelet membrane proteins (that would enhance the sensitivity of platelets to hydrogen peroxide). Effects of snake L-amino oxidases on platelets are controversial, since they either induce aggregation or inhibit agonist-induced aggregation. These different effects are probably due to different experimental conditions. The protein is L-amino-acid oxidase of Naja atra (Chinese cobra).